Consider the following 553-residue polypeptide: Phenylalanine--tRNA ligase beta subunit (553 aa).

The 77-residue stretch at 273–349 (FNVRNIDIEV…RAFGYNNITP (77 aa)) folds into the B5 domain. 4 residues coordinate Mg(2+): Asp327, Asp333, Asp336, and Asp337.

This sequence belongs to the phenylalanyl-tRNA synthetase beta subunit family. Type 2 subfamily. Tetramer of two alpha and two beta subunits. The cofactor is Mg(2+).

The protein localises to the cytoplasm. It carries out the reaction tRNA(Phe) + L-phenylalanine + ATP = L-phenylalanyl-tRNA(Phe) + AMP + diphosphate + H(+). The polypeptide is Phenylalanine--tRNA ligase beta subunit (Methanocella arvoryzae (strain DSM 22066 / NBRC 105507 / MRE50)).